An 88-amino-acid polypeptide reads, in one-letter code: Small ribosomal subunit protein bS20 (88 aa).

Belongs to the bacterial ribosomal protein bS20 family.

In terms of biological role, binds directly to 16S ribosomal RNA. The sequence is that of Small ribosomal subunit protein bS20 from Bradyrhizobium sp. (strain BTAi1 / ATCC BAA-1182).